Consider the following 301-residue polypeptide: 4-hydroxy-tetrahydrodipicolinate synthase (301 aa).

Thr46 lines the pyruvate pocket. Tyr135 (proton donor/acceptor) is an active-site residue. The active-site Schiff-base intermediate with substrate is Lys163. Ile205 is a pyruvate binding site.

Belongs to the DapA family. As to quaternary structure, homotetramer; dimer of dimers.

It is found in the cytoplasm. The enzyme catalyses L-aspartate 4-semialdehyde + pyruvate = (2S,4S)-4-hydroxy-2,3,4,5-tetrahydrodipicolinate + H2O + H(+). The protein operates within amino-acid biosynthesis; L-lysine biosynthesis via DAP pathway; (S)-tetrahydrodipicolinate from L-aspartate: step 3/4. Functionally, catalyzes the condensation of (S)-aspartate-beta-semialdehyde [(S)-ASA] and pyruvate to 4-hydroxy-tetrahydrodipicolinate (HTPA). This is 4-hydroxy-tetrahydrodipicolinate synthase from Lacticaseibacillus casei (strain BL23) (Lactobacillus casei).